A 267-amino-acid chain; its full sequence is Glucosamine-6-phosphate deaminase (267 aa).

Residue Asp72 is the Proton acceptor; for enolization step of the active site. The active-site For ring-opening step is the Asp141. Catalysis depends on His143, which acts as the Proton acceptor; for ring-opening step. Residue Glu148 is the For ring-opening step of the active site.

This sequence belongs to the glucosamine/galactosamine-6-phosphate isomerase family. NagB subfamily. In terms of assembly, homohexamer.

The catalysed reaction is alpha-D-glucosamine 6-phosphate + H2O = beta-D-fructose 6-phosphate + NH4(+). Its pathway is amino-sugar metabolism; N-acetylneuraminate degradation; D-fructose 6-phosphate from N-acetylneuraminate: step 5/5. With respect to regulation, allosterically activated by N-acetylglucosamine 6-phosphate (GlcNAc6P). Functionally, catalyzes the reversible isomerization-deamination of glucosamine 6-phosphate (GlcN6P) to form fructose 6-phosphate (Fru6P) and ammonium ion. The chain is Glucosamine-6-phosphate deaminase from Mannheimia succiniciproducens (strain KCTC 0769BP / MBEL55E).